Consider the following 99-residue polypeptide: Integration host factor subunit alpha (99 aa).

The segment at 49–71 (FGNFDLRDKNQRPGRNPKTGEDI) is disordered.

The protein belongs to the bacterial histone-like protein family. In terms of assembly, heterodimer of an alpha and a beta chain.

This protein is one of the two subunits of integration host factor, a specific DNA-binding protein that functions in genetic recombination as well as in transcriptional and translational control. The polypeptide is Integration host factor subunit alpha (Shewanella frigidimarina (strain NCIMB 400)).